The following is a 202-amino-acid chain: FMN-dependent NADH:quinone oxidoreductase (202 aa).

FMN contacts are provided by residues Ser12 and 21–23; that span reads SFS.

The protein belongs to the azoreductase type 1 family. As to quaternary structure, homodimer. FMN is required as a cofactor.

It catalyses the reaction 2 a quinone + NADH + H(+) = 2 a 1,4-benzosemiquinone + NAD(+). The enzyme catalyses N,N-dimethyl-1,4-phenylenediamine + anthranilate + 2 NAD(+) = 2-(4-dimethylaminophenyl)diazenylbenzoate + 2 NADH + 2 H(+). In terms of biological role, quinone reductase that provides resistance to thiol-specific stress caused by electrophilic quinones. Functionally, also exhibits azoreductase activity. Catalyzes the reductive cleavage of the azo bond in aromatic azo compounds to the corresponding amines. This Mycoplasma mobile (strain ATCC 43663 / 163K / NCTC 11711) (Mesomycoplasma mobile) protein is FMN-dependent NADH:quinone oxidoreductase.